A 310-amino-acid chain; its full sequence is tRNA-cytidine(32) 2-sulfurtransferase (310 aa).

The PP-loop motif motif lies at 47 to 52; it reads SGGKDS. Cys-122, Cys-125, and Cys-213 together coordinate [4Fe-4S] cluster.

Belongs to the TtcA family. In terms of assembly, homodimer. It depends on Mg(2+) as a cofactor. [4Fe-4S] cluster is required as a cofactor.

The protein resides in the cytoplasm. It carries out the reaction cytidine(32) in tRNA + S-sulfanyl-L-cysteinyl-[cysteine desulfurase] + AH2 + ATP = 2-thiocytidine(32) in tRNA + L-cysteinyl-[cysteine desulfurase] + A + AMP + diphosphate + H(+). It participates in tRNA modification. Its function is as follows. Catalyzes the ATP-dependent 2-thiolation of cytidine in position 32 of tRNA, to form 2-thiocytidine (s(2)C32). The sulfur atoms are provided by the cysteine/cysteine desulfurase (IscS) system. This Cronobacter sakazakii (strain ATCC BAA-894) (Enterobacter sakazakii) protein is tRNA-cytidine(32) 2-sulfurtransferase.